Reading from the N-terminus, the 429-residue chain is Adenylosuccinate synthetase (429 aa).

Residues 12–18 (GDEGKGK) and 40–42 (GHT) contribute to the GTP site. The active-site Proton acceptor is D13. Mg(2+)-binding residues include D13 and G40. IMP contacts are provided by residues 13-16 (DEGK), 38-41 (NAGH), T129, R143, Q223, T238, and R302. Residue H41 is the Proton donor of the active site. Residue 298-304 (TVTGRKR) coordinates substrate. GTP is bound by residues R304, 330 to 332 (KLD), and 412 to 414 (STS).

This sequence belongs to the adenylosuccinate synthetase family. As to quaternary structure, homodimer. Requires Mg(2+) as cofactor.

The protein localises to the cytoplasm. It carries out the reaction IMP + L-aspartate + GTP = N(6)-(1,2-dicarboxyethyl)-AMP + GDP + phosphate + 2 H(+). It functions in the pathway purine metabolism; AMP biosynthesis via de novo pathway; AMP from IMP: step 1/2. In terms of biological role, plays an important role in the de novo pathway of purine nucleotide biosynthesis. Catalyzes the first committed step in the biosynthesis of AMP from IMP. The sequence is that of Adenylosuccinate synthetase from Novosphingobium aromaticivorans (strain ATCC 700278 / DSM 12444 / CCUG 56034 / CIP 105152 / NBRC 16084 / F199).